The primary structure comprises 281 residues: 4-diphosphocytidyl-2-C-methyl-D-erythritol kinase (281 aa).

The active site involves lysine 15. 98-108 (PTGAGLGGGSS) provides a ligand contact to ATP. The active site involves aspartate 140.

It belongs to the GHMP kinase family. IspE subfamily.

The catalysed reaction is 4-CDP-2-C-methyl-D-erythritol + ATP = 4-CDP-2-C-methyl-D-erythritol 2-phosphate + ADP + H(+). Its pathway is isoprenoid biosynthesis; isopentenyl diphosphate biosynthesis via DXP pathway; isopentenyl diphosphate from 1-deoxy-D-xylulose 5-phosphate: step 3/6. Its function is as follows. Catalyzes the phosphorylation of the position 2 hydroxy group of 4-diphosphocytidyl-2C-methyl-D-erythritol. This is 4-diphosphocytidyl-2-C-methyl-D-erythritol kinase from Neisseria meningitidis serogroup B (strain ATCC BAA-335 / MC58).